Here is a 268-residue protein sequence, read N- to C-terminus: Hydroxyethylthiazole kinase (268 aa).

Met-44 contacts substrate. Arg-119 and Ser-165 together coordinate ATP. A substrate-binding site is contributed by Gly-192.

Belongs to the Thz kinase family. It depends on Mg(2+) as a cofactor.

It carries out the reaction 5-(2-hydroxyethyl)-4-methylthiazole + ATP = 4-methyl-5-(2-phosphooxyethyl)-thiazole + ADP + H(+). It functions in the pathway cofactor biosynthesis; thiamine diphosphate biosynthesis; 4-methyl-5-(2-phosphoethyl)-thiazole from 5-(2-hydroxyethyl)-4-methylthiazole: step 1/1. In terms of biological role, catalyzes the phosphorylation of the hydroxyl group of 4-methyl-5-beta-hydroxyethylthiazole (THZ). The chain is Hydroxyethylthiazole kinase from Corynebacterium glutamicum (strain R).